The following is a 373-amino-acid chain: RNA 3'-terminal phosphate cyclase-like protein (373 aa).

Belongs to the RNA 3'-terminal cyclase family. Type 2 subfamily. Part of the small subunit (SSU) processome, composed of more than 70 proteins and the RNA chaperone small nucleolar RNA (snoRNA) U3. Interacts with BMS1.

It localises to the nucleus. The protein localises to the nucleolus. Its function is as follows. As part of the small subunit (SSU) processome, it plays a role in 40S-ribosomal-subunit biogenesis in the early pre-rRNA processing steps at sites A0, A1 and A2 that are required for proper maturation of the 18S RNA. Activates BMS1 by promoting GDP/GTP exchange. Does not have cyclase activity. In Homo sapiens (Human), this protein is RNA 3'-terminal phosphate cyclase-like protein.